Reading from the N-terminus, the 144-residue chain is Interleukin-9 (144 aa).

Positions 1–18 (MLVTYILASVLLFSSVLG) are cleaved as a signal peptide. A Pyrrolidone carboxylic acid modification is found at glutamine 19. Asparagine 50, asparagine 78, asparagine 101, and asparagine 114 each carry an N-linked (GlcNAc...) asparagine glycan.

This sequence belongs to the IL-7/IL-9 family. As to quaternary structure, interacts with IL9R. Interacts with IL2RG.

It is found in the secreted. Functionally, multifunctional cytokine secreted mainly by T-helper 2 lymphocytes and also mast cells or NKT cells that plays important roles in the immune response against parasites. Affects intestinal epithelial permeability and adaptive immunity. In addition, induces the differentiation of specific T-cell subsets such as IL-17 producing helper T-cells (TH17) and also proliferation and differentiation of mast cells. Mechanistically, exerts its biological effects through a receptor composed of IL9R subunit and a signal transducing subunit IL2RG. Receptor stimulation results in the rapid activation of JAK1 and JAK3 kinase activities leading to STAT1, STAT3 and STAT5-mediated transcriptional programs. Induction of differentiation genes seems to be mediated by STAT1 alone, while protection of cells from apoptosis depends on STAT3 and STAT5. The sequence is that of Interleukin-9 (Il9) from Mus musculus (Mouse).